We begin with the raw amino-acid sequence, 134 residues long: MSWQAYVDDHLMCDIEGHEDHRLTAAAIVGHDGSVWAQSATFPQFKPEEMNGIMTDFNEPGHLAPTGLHLGGTKYMVIQGEAGAVIRGKKGSGGITIKKTGQALVFGIYEEPVTPGQCNMVVERLGDYLVEQGM.

A disulfide bridge links Cys13 with Cys118. The short motif at Ala84–Thr100 is the Involved in PIP2 interaction element. Thr114 carries the post-translational modification Phosphothreonine.

It belongs to the profilin family. Occurs in many kinds of cells as a complex with monomeric actin in a 1:1 ratio. Post-translationally, phosphorylated by MAP kinases.

It is found in the cytoplasm. It localises to the cytoskeleton. Functionally, binds to actin and affects the structure of the cytoskeleton. At high concentrations, profilin prevents the polymerization of actin, whereas it enhances it at low concentrations. By binding to PIP2, it inhibits the formation of IP3 and DG. The protein is Profilin-1 (PRO1) of Olea europaea (Common olive).